The following is a 497-amino-acid chain: MASGILLNVKEEVTCPICLELLTEPLSLPCGHSFCQACITANHRKSMLYKEGERSCPVCRISYQPENIQPNRHVANIVEKLREVKLSPEEGLKVDHCARHGEKLLLFCQEDSKVICWLCERSQEHRGHHTFLMEEVAQEYHVKLQTALEMLRQKQQEAEKLEADIREEKASWKIQIDYDKTNVSADFEQLREILDWEESNELQNLEKEEEDILKSLTKSETEMVQQTQYMRELISDLEHRLQGSMMELLQGVDGIIKRIENMTLKKPKTFHKNQRRVFRAPDLKGMLDMFRELTDVRRYWVDVTLAPNNISHAVIAEDKRQVSSRNPQITYQAPGTLFSFPSLTNFNYCTGVLGSQSITSGKHYWEVDVSKKSAWILGVCAGFQPDAMYNIEQNENYQPKYGYWVIGLQEGVKYSVFQDGSSHTPFAPFIVPLSVIICPDRVGVFVDYEACTVSFFNITNHGFLIYKFSQCSFSKPVFPYLNPRKCTVPMTLCSPSS.

Alanine 2 is modified (N-acetylalanine). The RING-type zinc finger occupies 15-60; it reads CPICLELLTEPLSLPCGHSFCQACITANHRKSMLYKEGERSCPVCR. Serine 87 carries the phosphoserine modification. The B box-type zinc finger occupies 92–133; sequence LKVDHCARHGEKLLLFCQEDSKVICWLCERSQEHRGHHTFLM. Zn(2+) is bound by residues cysteine 97, histidine 100, cysteine 119, and histidine 125. Residues 137–225 are a coiled coil; sequence AQEYHVKLQT…LTKSETEMVQ (89 aa). The segment at 187–200 is required for interaction with GABARAP and for autophagy; sequence FEQLREILDWEESN. The 215-residue stretch at 283–497 folds into the B30.2/SPRY domain; it reads LKGMLDMFRE…VPMTLCSPSS (215 aa).

It belongs to the TRIM/RBCC family. As to quaternary structure, can form homodimers and homotrimers. In addition to lower-order dimerization, also exhibits a higher-order multimerization and both low- and high-order multimerizations are essential for its restriction activity. Interacts with BTBD1 and BTBD2. Interacts with PSMC4, PSMC5, PSMD7 and HSPA8/HSC70. Interacts (via B30.2/SPRY domain) with HSPA1A/B. Interacts with PSMC2, MAP3K7/TAK1, TAB2 and TAB3. Interacts with SQSTM1. Interacts with TRIM6 and TRIM34. Interacts with ULK1 (phosphorylated form), GABARAP, GABARAPL1, GABARAPL2, MAP1LC3A, MAP1LC3C and BECN1. Post-translationally, degraded in a proteasome-independent fashion in the absence of viral infection but in a proteasome-dependent fashion following exposure to restriction sensitive virus. In terms of processing, autoubiquitinated in a RING finger- and UBE2D2-dependent manner. Monoubiquitinated by TRIM21. Deubiquitinated by Yersinia YopJ. Ubiquitination may not lead to proteasomal degradation.

It localises to the cytoplasm. The protein resides in the nucleus. The catalysed reaction is S-ubiquitinyl-[E2 ubiquitin-conjugating enzyme]-L-cysteine + [acceptor protein]-L-lysine = [E2 ubiquitin-conjugating enzyme]-L-cysteine + N(6)-ubiquitinyl-[acceptor protein]-L-lysine.. Its pathway is protein modification; protein ubiquitination. Its function is as follows. Capsid-specific restriction factor that prevents infection from non-host-adapted retroviruses. Blocks viral replication early in the life cycle, after viral entry but before reverse transcription. In addition to acting as a capsid-specific restriction factor, also acts as a pattern recognition receptor that activates innate immune signaling in response to the retroviral capsid lattice. Binding to the viral capsid triggers its E3 ubiquitin ligase activity, and in concert with the heterodimeric ubiquitin conjugating enzyme complex UBE2V1-UBE2N (also known as UBC13-UEV1A complex) generates 'Lys-63'-linked polyubiquitin chains, which in turn are catalysts in the autophosphorylation of the MAP3K7/TAK1 complex (includes TAK1, TAB2, and TAB3). Activation of the MAP3K7/TAK1 complex by autophosphorylation results in the induction and expression of NF-kappa-B and MAPK-responsive inflammatory genes, thereby leading to an innate immune response in the infected cell. Plays a role in regulating autophagy through activation of autophagy regulator BECN1 by causing its dissociation from its inhibitors BCL2 and TAB2. The sequence is that of Tripartite motif-containing protein 5 (TRIM5) from Papio anubis (Olive baboon).